A 586-amino-acid chain; its full sequence is Potassium-transporting ATPase potassium-binding subunit (586 aa).

12 helical membrane passes run 11-31, 67-87, 136-156, 179-199, 279-299, 306-326, 351-371, 381-401, 403-423, 442-462, 507-527, and 551-571; these read LFLVLLLAVVKPMGAFMAKVF, AVAVLLFNLALFVSLFAILML, GLAVHNFVSAATGIAVAIAVI, LYVLLPISLIGALILVSQGVI, VEIFLILLIPFALTSTFGVMV, WAILGVMLLMMAISFAVLQGV, FGLAGASLFTVATTGTSCGAV, LGGMIPLGLILLGEIAPGGVG, GLYTMLAFVVIAVFVAGLMIG, IITVLAAGVVVLILSGVAMIT, ILGSLAMLVGRFAPAVAVLAM, and FALWLMLVILIVGALTFFPAL.

The protein belongs to the KdpA family. As to quaternary structure, the system is composed of three essential subunits: KdpA, KdpB and KdpC.

The protein localises to the cell inner membrane. In terms of biological role, part of the high-affinity ATP-driven potassium transport (or Kdp) system, which catalyzes the hydrolysis of ATP coupled with the electrogenic transport of potassium into the cytoplasm. This subunit binds the periplasmic potassium ions and delivers the ions to the membrane domain of KdpB through an intramembrane tunnel. The chain is Potassium-transporting ATPase potassium-binding subunit from Geobacter metallireducens (strain ATCC 53774 / DSM 7210 / GS-15).